The primary structure comprises 303 residues: Ribonuclease HIII (303 aa).

One can recognise an RNase H type-2 domain in the interval 85 to 302 (CSLIGSDEVG…TKKAYQLLKK (218 aa)). A divalent metal cation contacts are provided by Asp-91, Glu-92, and Asp-196.

This sequence belongs to the RNase HII family. RnhC subfamily. Mn(2+) is required as a cofactor. It depends on Mg(2+) as a cofactor.

The protein resides in the cytoplasm. It catalyses the reaction Endonucleolytic cleavage to 5'-phosphomonoester.. Functionally, endonuclease that specifically degrades the RNA of RNA-DNA hybrids. The sequence is that of Ribonuclease HIII from Streptococcus mutans serotype c (strain ATCC 700610 / UA159).